We begin with the raw amino-acid sequence, 397 residues long: Sexual differentiation process protein isp7 (397 aa).

Positions 255–353 (PTTSIRLLRY…RYTIPFFLQG (99 aa)) constitute a Fe2OG dioxygenase domain.

Belongs to the iron/ascorbate-dependent oxidoreductase family.

The sequence is that of Sexual differentiation process protein isp7 (isp7) from Schizosaccharomyces pombe (strain 972 / ATCC 24843) (Fission yeast).